The sequence spans 206 residues: Synaptosomal-associated protein 25 (206 aa).

Over residues 1–20 the composition is skewed to basic and acidic residues; the sequence is MAEDADMRNELEEMQRRADQ. A disordered region spans residues 1–25; sequence MAEDADMRNELEEMQRRADQLADES. The interval 1-75 is interaction with CENPF; that stretch reads MAEDADMRNE…QINKDMKEAE (75 aa). A t-SNARE coiled-coil homology 1 domain is found at 19 to 81; sequence DQLADESLES…KEAEKNSTDL (63 aa). S-palmitoyl cysteine attachment occurs at residues cysteine 85, cysteine 88, cysteine 90, and cysteine 92. Residues 111-120 form an interaction with ZDHHC17 region; it reads GVVASQPARV. Threonine 138 is subject to Phosphothreonine. Residues 140–202 enclose the t-SNARE coiled-coil homology 2 domain; sequence DARENEMDEN…DEANQRATKM (63 aa). 2 positions are modified to phosphoserine: serine 154 and serine 187.

Belongs to the SNAP-25 family. Part of the SNARE core complex containing SNAP25, VAMP2 and STX1A; this complex binds CPLX1. Found in a complex containing SYT1, SV2B and syntaxin-1. Found in a ternary complex with STX1A and VAMP8. Interacts with HSC70 and with SYT9, forming a complex with DNAJC5. The interaction with SYT9 is inhibited in presence of calcium. Isoform 1 and isoform 2 interact with BLOC1S6. Interacts with CENPF. Interacts with EQTN. Interacts with HGS. Interacts with KCNB1 (via N-terminus); reduces the voltage-dependent potassium channel KCNB1 activity in pancreatic beta cells. Interacts with OTOF. Interacts with RIMS1. Interacts with SNAPIN. Interacts with STXBP6. Interacts with TRIM9. Interacts with ZDHHC13 (via ANK repeats). Interacts with ZDHHC17 (via ANK repeats). Associates with the BLOC-1 complex. Interacts with PLCL1 (via C2 domain). Interacts with PRRT2; this interaction may impair the formation of the SNARE complex. Interacts with alpha-synuclein/SNCA. Interacts with PRPH2. Interacts with ROM1. Interacts with STX3. Post-translationally, palmitoylated. Cys-85 appears to be the main site, and palmitoylation is required for membrane association.

It is found in the cytoplasm. The protein resides in the perinuclear region. The protein localises to the cell membrane. Its subcellular location is the synapse. It localises to the synaptosome. It is found in the photoreceptor inner segment. T-SNARE involved in the molecular regulation of neurotransmitter release. May play an important role in the synaptic function of specific neuronal systems. Associates with proteins involved in vesicle docking and membrane fusion. Regulates plasma membrane recycling through its interaction with CENPF. Modulates the gating characteristics of the delayed rectifier voltage-dependent potassium channel KCNB1 in pancreatic beta cells. This is Synaptosomal-associated protein 25 (SNAP25) from Pongo abelii (Sumatran orangutan).